Here is a 390-residue protein sequence, read N- to C-terminus: Ankyrin repeat domain-containing protein 63 (390 aa).

ANK repeat units follow at residues 11 to 40 (AGTRTFLEAMQAGKVHLARFVLDALDRSII), 46 to 79 (QGRTPLMVAVGLPDPAMRSRFVRLLLEQGAAVNL), 83 to 112 (RGRTALSLACERGHLDAVQLLVQFSGDPEA), 116 to 145 (AGNSPVMWAAACGHGAVLEFLVRSFRRLGL), and 153 to 182 (AGLTALQLAASRGHGTCVQALTGPWGRAAA). Disordered stretches follow at residues 181-213 (AAAAAARGSNSDSPPGHPAPAPSPERRRPSPRR) and 226-245 (AGGHGHGHGHGHGHGGELAS). Serine 193 carries the post-translational modification Phosphoserine. Serine 304 carries the phosphoserine modification. A disordered region spans residues 320-377 (VGLSPHPEGCPGSGRLGLRRRSTAPDIPSLVGEASGPESGPELENNALPFSVPGPKPW).

This Mus musculus (Mouse) protein is Ankyrin repeat domain-containing protein 63.